A 173-amino-acid chain; its full sequence is Probable capsid assembly scaffolding protein (173 aa).

The tract at residues 1 to 30 (MSDTATTEGTPAGDPTPVVTDKPLEPTPKT) is disordered. A coiled-coil region spans residues 36 to 56 (VKELRQEAAAARVAKKDAVEA).

It belongs to the L5likevirus scaffolding protein family.

Scaffolding protein involved in the icosahedric procapsid assembly. Coassembles with the capsid proteins to form the procapsid, in which the scaffolding protein is found within the external shell of icosahedrally arranged capsid protein subunits. The sequence is that of Probable capsid assembly scaffolding protein (16) from Mycobacterium (Mycobacteriophage D29).